The chain runs to 433 residues: Adenylosuccinate synthetase (433 aa).

GTP is bound by residues 12–18 (GDEGKGK) and 40–42 (GHT). D13 functions as the Proton acceptor in the catalytic mechanism. Positions 13 and 40 each coordinate Mg(2+). Residues 13–16 (DEGK), 38–41 (NAGH), T130, R144, Q225, T240, and R304 contribute to the IMP site. The Proton donor role is filled by H41. Residue 300–306 (ATTGRPR) coordinates substrate. GTP contacts are provided by residues R306, 332–334 (KLD), and 414–416 (SIG).

It belongs to the adenylosuccinate synthetase family. As to quaternary structure, homodimer. Mg(2+) is required as a cofactor.

The protein localises to the cytoplasm. The catalysed reaction is IMP + L-aspartate + GTP = N(6)-(1,2-dicarboxyethyl)-AMP + GDP + phosphate + 2 H(+). It functions in the pathway purine metabolism; AMP biosynthesis via de novo pathway; AMP from IMP: step 1/2. In terms of biological role, plays an important role in the de novo pathway of purine nucleotide biosynthesis. Catalyzes the first committed step in the biosynthesis of AMP from IMP. The chain is Adenylosuccinate synthetase from Geobacter sulfurreducens (strain ATCC 51573 / DSM 12127 / PCA).